Here is a 375-residue protein sequence, read N- to C-terminus: Anhydro-N-acetylmuramic acid kinase (375 aa).

19 to 26 (GTSLDGVD) contributes to the ATP binding site.

Belongs to the anhydro-N-acetylmuramic acid kinase family.

It carries out the reaction 1,6-anhydro-N-acetyl-beta-muramate + ATP + H2O = N-acetyl-D-muramate 6-phosphate + ADP + H(+). It functions in the pathway amino-sugar metabolism; 1,6-anhydro-N-acetylmuramate degradation. The protein operates within cell wall biogenesis; peptidoglycan recycling. Catalyzes the specific phosphorylation of 1,6-anhydro-N-acetylmuramic acid (anhMurNAc) with the simultaneous cleavage of the 1,6-anhydro ring, generating MurNAc-6-P. Is required for the utilization of anhMurNAc either imported from the medium or derived from its own cell wall murein, and thus plays a role in cell wall recycling. This chain is Anhydro-N-acetylmuramic acid kinase, found in Ruegeria sp. (strain TM1040) (Silicibacter sp.).